The primary structure comprises 684 residues: Pseudohemocyanin-1 (684 aa).

Residues 1-23 form the signal peptide; that stretch reads SLVVAAAAASPYSGSHDFSGFQR. The disordered stretch occupies residues 7–32; the sequence is AAASPYSGSHDFSGFQRDEPDGVPTA. Residues Asn100, Asn193, Asn230, and Asn626 are each glycosylated (N-linked (GlcNAc...) asparagine).

It belongs to the tyrosinase family. Hemocyanin subfamily. As to quaternary structure, hexamer. Strongly expressed in ovaries. Also expressed in heart. Not detected in hepatopancreas, gills, connective tissue or muscle.

In terms of biological role, does not function as a hemocyanin. This Homarus americanus (American lobster) protein is Pseudohemocyanin-1.